Here is a 119-residue protein sequence, read N- to C-terminus: Large ribosomal subunit protein uL22 (119 aa).

This sequence belongs to the universal ribosomal protein uL22 family. Part of the 50S ribosomal subunit.

This protein binds specifically to 23S rRNA; its binding is stimulated by other ribosomal proteins, e.g. L4, L17, and L20. It is important during the early stages of 50S assembly. It makes multiple contacts with different domains of the 23S rRNA in the assembled 50S subunit and ribosome. Its function is as follows. The globular domain of the protein is located near the polypeptide exit tunnel on the outside of the subunit, while an extended beta-hairpin is found that lines the wall of the exit tunnel in the center of the 70S ribosome. The polypeptide is Large ribosomal subunit protein uL22 (Trichodesmium erythraeum (strain IMS101)).